The primary structure comprises 918 residues: GPI ethanolamine phosphate transferase 3 (918 aa).

Residues 16–36 (IGTWKYIQACIFFAIILISNF) traverse the membrane as a helical segment. 5 N-linked (GlcNAc...) asparagine glycosylation sites follow: asparagine 54, asparagine 71, asparagine 101, asparagine 197, and asparagine 399. 15 consecutive transmembrane segments (helical) span residues 429–449 (LFPM…LALL), 459–479 (MSAN…ILIL), 486–506 (SPFP…LNSF), 523–543 (FSIF…FTVW), 547–563 (LCHF…FCKC), 567–587 (MSPL…LQVI), 616–636 (TLIV…ILQL), 651–671 (LSIL…HHVF), 687–707 (SLAN…FFLL), 715–735 (INVI…LSFL), 738–758 (PLGH…IQLK), 762–782 (PSVG…SHFF), 813–833 (IFMF…IPLF), 853–873 (FSFI…AGFF), and 887–907 (FMLS…QCFG).

Belongs to the PIGG/PIGN/PIGO family. PIGO subfamily. In terms of processing, glycosylated.

It localises to the endoplasmic reticulum membrane. The protein operates within glycolipid biosynthesis; glycosylphosphatidylinositol-anchor biosynthesis. Involved in glycosylphosphatidylinositol-anchor biosynthesis. Transfers ethanolamine phosphate to the GPI third mannose which links the GPI-anchor to the C-terminus of the proteins by an amide bond. Involved in cell wall biosynthesis. The protein is GPI ethanolamine phosphate transferase 3 (gpi13) of Schizosaccharomyces pombe (strain 972 / ATCC 24843) (Fission yeast).